Reading from the N-terminus, the 389-residue chain is Tryptophan synthase beta chain (389 aa).

Residue Lys-84 is modified to N6-(pyridoxal phosphate)lysine.

The protein belongs to the TrpB family. Tetramer of two alpha and two beta chains. Requires pyridoxal 5'-phosphate as cofactor.

It carries out the reaction (1S,2R)-1-C-(indol-3-yl)glycerol 3-phosphate + L-serine = D-glyceraldehyde 3-phosphate + L-tryptophan + H2O. The protein operates within amino-acid biosynthesis; L-tryptophan biosynthesis; L-tryptophan from chorismate: step 5/5. Functionally, the beta subunit is responsible for the synthesis of L-tryptophan from indole and L-serine. The sequence is that of Tryptophan synthase beta chain from Methanococcus aeolicus (strain ATCC BAA-1280 / DSM 17508 / OCM 812 / Nankai-3).